The primary structure comprises 492 residues: MTFRGDTAVLVLAAGPGSRMRSDTPKVLHTIAGRSMLSHSLHAITKLAPQHLVVVLGHEHQRIAPLVAELADTLERTIDVALQDRPRGTGHAVFCGLSALPDDYGGIVVVTSGDTPLLDANTLAELIATHNATSAAVTVLTTTFSDPLGYGRILRTQDNEVMAIIEHADASPSQREIREVNAGVYAFDITALRSALIRLNSNNTQQELYLTDVISILRREGQKVNAQHIDDNALVAGVNNRVQLAELSAELNRRIVATHQVAGVTIIDPATTWIDIDVTIGNDTVIHPGTQLLGRTQIGECCVIGPDTTLTDVLVSQRATVVRTHGTSSTIGAGAMVGPFTYLRPGTVLGTKGKLGAFVETKNSTIGTGAKVPHLTYVGDADIGEHSNIGASSVFVNYDGTAKQRTTIGSHVRTGSDTKFVAPVTVGDGAYTGAGTVVRNDVPPGALAVSVSPQRNIENWVQRKRPGSAAAQAAEKASTRTGKQSQQKSEPD.

The segment at 1-241 (MTFRGDTAVL…NALVAGVNNR (241 aa)) is pyrophosphorylase. UDP-N-acetyl-alpha-D-glucosamine contacts are provided by residues 12-15 (LAAG), Lys-26, Gln-83, 88-89 (GT), 112-114 (SGD), Gly-151, Glu-166, Asn-181, and Asn-239. Asp-114 contributes to the Mg(2+) binding site. A Mg(2+)-binding site is contributed by Asn-239. The segment at 242–262 (VQLAELSAELNRRIVATHQVA) is linker. Positions 263 to 492 (GVTIIDPATT…KQSQQKSEPD (230 aa)) are N-acetyltransferase. 2 residues coordinate UDP-N-acetyl-alpha-D-glucosamine: Arg-344 and Lys-362. The active-site Proton acceptor is the His-374. 2 residues coordinate UDP-N-acetyl-alpha-D-glucosamine: Tyr-377 and Asn-388. Residues Ala-391, 397–398 (NY), Ser-416, and Ala-434 contribute to the acetyl-CoA site. Positions 461 to 492 (VQRKRPGSAAAQAAEKASTRTGKQSQQKSEPD) are disordered. Residues 479–492 (TRTGKQSQQKSEPD) are compositionally biased toward polar residues.

This sequence in the N-terminal section; belongs to the N-acetylglucosamine-1-phosphate uridyltransferase family. The protein in the C-terminal section; belongs to the transferase hexapeptide repeat family. As to quaternary structure, homotrimer. The cofactor is Mg(2+).

The protein resides in the cytoplasm. It catalyses the reaction alpha-D-glucosamine 1-phosphate + acetyl-CoA = N-acetyl-alpha-D-glucosamine 1-phosphate + CoA + H(+). It carries out the reaction N-acetyl-alpha-D-glucosamine 1-phosphate + UTP + H(+) = UDP-N-acetyl-alpha-D-glucosamine + diphosphate. It functions in the pathway nucleotide-sugar biosynthesis; UDP-N-acetyl-alpha-D-glucosamine biosynthesis; N-acetyl-alpha-D-glucosamine 1-phosphate from alpha-D-glucosamine 6-phosphate (route II): step 2/2. Its pathway is nucleotide-sugar biosynthesis; UDP-N-acetyl-alpha-D-glucosamine biosynthesis; UDP-N-acetyl-alpha-D-glucosamine from N-acetyl-alpha-D-glucosamine 1-phosphate: step 1/1. The protein operates within bacterial outer membrane biogenesis; LPS lipid A biosynthesis. Functionally, catalyzes the last two sequential reactions in the de novo biosynthetic pathway for UDP-N-acetylglucosamine (UDP-GlcNAc). The C-terminal domain catalyzes the transfer of acetyl group from acetyl coenzyme A to glucosamine-1-phosphate (GlcN-1-P) to produce N-acetylglucosamine-1-phosphate (GlcNAc-1-P), which is converted into UDP-GlcNAc by the transfer of uridine 5-monophosphate (from uridine 5-triphosphate), a reaction catalyzed by the N-terminal domain. In Mycobacterium leprae (strain Br4923), this protein is Bifunctional protein GlmU.